A 260-amino-acid chain; its full sequence is 1-(5-phosphoribosyl)-5-[(5-phosphoribosylamino)methylideneamino] imidazole-4-carboxamide isomerase (260 aa).

D8 (proton acceptor) is an active-site residue. Catalysis depends on D130, which acts as the Proton donor.

Belongs to the HisA/HisF family.

It is found in the cytoplasm. The enzyme catalyses 1-(5-phospho-beta-D-ribosyl)-5-[(5-phospho-beta-D-ribosylamino)methylideneamino]imidazole-4-carboxamide = 5-[(5-phospho-1-deoxy-D-ribulos-1-ylimino)methylamino]-1-(5-phospho-beta-D-ribosyl)imidazole-4-carboxamide. It participates in amino-acid biosynthesis; L-histidine biosynthesis; L-histidine from 5-phospho-alpha-D-ribose 1-diphosphate: step 4/9. The polypeptide is 1-(5-phosphoribosyl)-5-[(5-phosphoribosylamino)methylideneamino] imidazole-4-carboxamide isomerase (Chlorobium phaeobacteroides (strain BS1)).